The sequence spans 336 residues: Methionyl-tRNA formyltransferase (336 aa).

110 to 113 (SLLP) contacts (6S)-5,6,7,8-tetrahydrofolate.

The protein belongs to the Fmt family.

The enzyme catalyses L-methionyl-tRNA(fMet) + (6R)-10-formyltetrahydrofolate = N-formyl-L-methionyl-tRNA(fMet) + (6S)-5,6,7,8-tetrahydrofolate + H(+). Functionally, attaches a formyl group to the free amino group of methionyl-tRNA(fMet). The formyl group appears to play a dual role in the initiator identity of N-formylmethionyl-tRNA by promoting its recognition by IF2 and preventing the misappropriation of this tRNA by the elongation apparatus. This chain is Methionyl-tRNA formyltransferase, found in Prochlorococcus marinus (strain NATL2A).